Consider the following 134-residue polypeptide: ATP synthase epsilon chain (134 aa).

It belongs to the ATPase epsilon chain family. As to quaternary structure, F-type ATPases have 2 components, CF(1) - the catalytic core - and CF(0) - the membrane proton channel. CF(1) has five subunits: alpha(3), beta(3), gamma(1), delta(1), epsilon(1). CF(0) has three main subunits: a, b and c.

The protein resides in the cell membrane. Its function is as follows. Produces ATP from ADP in the presence of a proton gradient across the membrane. This is ATP synthase epsilon chain from Listeria monocytogenes serotype 4b (strain F2365).